The sequence spans 489 residues: Cytochrome P450 2C70 (489 aa).

The signal sequence occupies residues 1 to 27 (MALFIFLGIWLSCFLFLFLWNQHRGRG). Cysteine 434 is a heme binding site.

It belongs to the cytochrome P450 family. Requires heme as cofactor. Expressed in liver.

The protein resides in the endoplasmic reticulum membrane. The protein localises to the microsome membrane. It carries out the reaction chenodeoxycholate + reduced [NADPH--hemoprotein reductase] + O2 = alpha-muricholate + oxidized [NADPH--hemoprotein reductase] + H2O + H(+). It catalyses the reaction ursodeoxycholate + reduced [NADPH--hemoprotein reductase] + O2 = beta-muricholate + oxidized [NADPH--hemoprotein reductase] + H2O + H(+). A cytochrome P450 monooxygenase involved in muricholic acid (MCA) synthesis. Hydroxylates at the 6-beta position two major bile acids, chenodeoxycholic acid (CDCA) and ursodeoxycholic acid (UDCA) to form alpha-MCA and beta-MCA, respectively. May regulate NR1H4/farnesoid X receptor signaling, as taurine-conjugated MCAs are antagonists of NR1H4. Mechanistically, uses molecular oxygen inserting one oxygen atom into a substrate, and reducing the second into a water molecule, with two electrons provided by NADPH via cytochrome P450 reductase (CPR; NADPH-ferrihemoprotein reductase). The sequence is that of Cytochrome P450 2C70 from Mus musculus (Mouse).